The following is a 181-amino-acid chain: Adenine phosphoribosyltransferase (181 aa).

Belongs to the purine/pyrimidine phosphoribosyltransferase family. As to quaternary structure, homodimer.

It localises to the cytoplasm. It carries out the reaction AMP + diphosphate = 5-phospho-alpha-D-ribose 1-diphosphate + adenine. Its pathway is purine metabolism; AMP biosynthesis via salvage pathway; AMP from adenine: step 1/1. In terms of biological role, catalyzes a salvage reaction resulting in the formation of AMP, that is energically less costly than de novo synthesis. The sequence is that of Adenine phosphoribosyltransferase from Aeromonas salmonicida (strain A449).